We begin with the raw amino-acid sequence, 117 residues long: uncharacterized protein (117 aa).

The protein resides in the mitochondrion. This is an uncharacterized protein from Arabidopsis thaliana (Mouse-ear cress).